We begin with the raw amino-acid sequence, 102 residues long: MVRYRMRSLSERSHEVHGQQVHGQDQGHNGQEEQGLNPEHVEVYERTHGHSHYRRRHCSRRRLHRIHRRRHRSCRRRRRRSCRHRRRHRRGCRTRRRRCRRH.

The tract at residues 1 to 102 (MVRYRMRSLS…RTRRRRCRRH (102 aa)) is disordered. Phosphoserine occurs at positions 8 and 10. A compositionally biased stretch (basic and acidic residues) spans 8-17 (SLSERSHEVH). Over residues 18-29 (GQQVHGQDQGHN) the composition is skewed to low complexity. Residues 39 to 48 (EHVEVYERTH) show a composition bias toward basic and acidic residues. A compositionally biased stretch (basic residues) spans 49 to 102 (GHSHYRRRHCSRRRLHRIHRRRHRSCRRRRRRSCRHRRRHRRGCRTRRRRCRRH).

Belongs to the protamine P2 family. Interacts with TDRP. Post-translationally, proteolytic processing into mature chains is required for histone eviction during spermatogenesis. Transition proteins (TNP1 and TNP2) are required for processing. In terms of tissue distribution, testis.

The protein localises to the nucleus. The protein resides in the chromosome. Protamines substitute for histones in the chromatin of sperm during the haploid phase of spermatogenesis. They compact sperm DNA into a highly condensed, stable and inactive complex. This chain is Protamine-2 (PRM2), found in Macaca mulatta (Rhesus macaque).